The chain runs to 262 residues: Protein crossbronx-like (262 aa).

The region spanning 15–179 (RQGYQVLAEY…VQELALFTKK (165 aa)) is the UBC core domain.

Belongs to the ubiquitin-conjugating enzyme family. FTS subfamily.

The sequence is that of Protein crossbronx-like from Drosophila pseudoobscura pseudoobscura (Fruit fly).